A 337-amino-acid chain; its full sequence is Putative 4-hydroxythreonine-4-phosphate dehydrogenase 2 (337 aa).

The a divalent metal cation site is built by H173, H217, and H274.

Belongs to the PdxA family. As to quaternary structure, homodimer. Zn(2+) is required as a cofactor. The cofactor is Mg(2+). Requires Co(2+) as cofactor.

The protein localises to the cytoplasm. It catalyses the reaction 4-(phosphooxy)-L-threonine + NAD(+) = 3-amino-2-oxopropyl phosphate + CO2 + NADH. It functions in the pathway cofactor biosynthesis; pyridoxine 5'-phosphate biosynthesis; pyridoxine 5'-phosphate from D-erythrose 4-phosphate: step 4/5. Its function is as follows. Catalyzes the NAD(P)-dependent oxidation of 4-(phosphooxy)-L-threonine (HTP) into 2-amino-3-oxo-4-(phosphooxy)butyric acid which spontaneously decarboxylates to form 3-amino-2-oxopropyl phosphate (AHAP). This is Putative 4-hydroxythreonine-4-phosphate dehydrogenase 2 from Pseudomonas aeruginosa (strain ATCC 15692 / DSM 22644 / CIP 104116 / JCM 14847 / LMG 12228 / 1C / PRS 101 / PAO1).